The primary structure comprises 53 residues: uncharacterized protein (53 aa).

The protein belongs to the ycf15 family.

It is found in the plastid. It localises to the chloroplast. This is an uncharacterized protein from Helianthus annuus (Common sunflower).